Consider the following 174-residue polypeptide: NADH-quinone oxidoreductase subunit B (174 aa).

Cys51, Cys52, Cys116, and Cys146 together coordinate [4Fe-4S] cluster.

The protein belongs to the complex I 20 kDa subunit family. As to quaternary structure, NDH-1 is composed of 14 different subunits. Subunits NuoB, C, D, E, F, and G constitute the peripheral sector of the complex. Requires [4Fe-4S] cluster as cofactor.

It is found in the cell inner membrane. The catalysed reaction is a quinone + NADH + 5 H(+)(in) = a quinol + NAD(+) + 4 H(+)(out). Functionally, NDH-1 shuttles electrons from NADH, via FMN and iron-sulfur (Fe-S) centers, to quinones in the respiratory chain. The immediate electron acceptor for the enzyme in this species is believed to be ubiquinone. Couples the redox reaction to proton translocation (for every two electrons transferred, four hydrogen ions are translocated across the cytoplasmic membrane), and thus conserves the redox energy in a proton gradient. This chain is NADH-quinone oxidoreductase subunit B, found in Anaplasma phagocytophilum (strain HZ).